The chain runs to 1050 residues: MSEEISPNDRKFITNLLTQKNQESLLLSIGDKISKKKNKKPSKRIILITKNRIFFLKPSQNKVKKDIHLLDIQEIKSSTSNEFTIVAKVDNKQFSYGLITNKTDEIINQIRVTFNHQFFGCPEESTFKCTDIKDSRLVEIEQKDLPCGGFVETYQSICDHLGVPPRDDICWDMTNIISSKNIRSFNIGEIELPTSAGDTIRCLLGALKYNNYFKSFNFNNYTFNKEQFGYLAEVLKCNSTVEDLSLNNVGLKHDTMPIIATALSSNKNLALTAIDISNNQIEDKGMTAFSSYVASSLRGIASLDVSNTNCNKAGISVLTNALKKNIKMSSTLSYLNLSGNKMEADGSAGLSSFLASPNTLKTLNISNTTPSMETIVGALVIGCAELKTIDISDNKLTKKEVPHLVRFIGASSTLKHFNLSGTKVPVENLKELVVAITSNIYLQDVVLDLKNNDLGIAGARMLASLATDKLSNVIYLDVSENDFGDEGVSVICDGFVGNSTIKKLILNGNFKQSKTKSRPSAIESVISLLESECPLETLHMTVGNSKSPLKADILSLIYSLATNSSLLELDISGHQMGPKGAIGLGKALQTNKTLHTLIWDDNLTTAIGFAGFQVGLERNLTLKNMPTPLNDIIQCHREPKFQQIWKEIDSCINRNQSPTRAFEGNGGNSIGATNLSFLASGQQQGVEKLLNKIKSIGRKVTDPNNILIVKDAESTEKVIGGIHLIKESIHASLEMELNQKLKDFVQVVNDVINAKKNEMTQQILESMQNTFQSMDGPTIKRLATTIQYGSKDVDEQQIHSTLVKGAGAELSSRAHECFISALDIASDYTYEKITIGLDSVFKDLILEESQAQNEASGATPIPDSPVPTRSPQPTSPPITPQPTPTTNVPPVTAPRTGAAAPLKPANPPPVSTTTTPPVSTTPKPTQPVSKFGAKLSANSAVAEAIARNMGGGAPPIRKPVAPEPEPEPVTPTKDVTPLKSKPVVAPRSTPTTSTPTKTPVKKPSGPSVPGSLSDAPESDSAELTHVTASRPHIASKRKPPTRRPRPPTEN.

Residues methionine 1 to serine 179 are required for interaction with capping protein. 8 LRR repeats span residues aspartate 243–asparagine 266, asparagine 268–serine 291, serine 329–serine 352, cysteine 383–glycine 409, serine 411–isoleucine 436, leucine 442–serine 464, leucine 470–aspartate 493, and asparagine 563–threonine 590. Disordered stretches follow at residues alanine 851–phenylalanine 931 and isoleucine 945–asparagine 1050. Positions proline 862–threonine 883 are enriched in pro residues. 2 stretches are compositionally biased toward low complexity: residues proline 884–lysine 903 and serine 911–serine 929. 2 consecutive short sequence motifs (PXXP motif; important for binding to SH3 domain-containing proteins) follow at residues proline 959–glutamate 963 and proline 968–proline 971. Positions serine 988–serine 1011 are enriched in low complexity. Over residues isoleucine 1033–asparagine 1050 the composition is skewed to basic residues.

Belongs to the CARMIL family. As to quaternary structure, interacts (via PXXP domains) with myoB and myoC (via SH3 domain). Interacts (via N-terminus) with the capping proteins acpA and acpB. Interacts (via the region between the LRR domain and COOH-terminal proline-rich domain) with the seven member Arp2/3 complex (arpB/Arp2, arpC/Arp3, arcA/p41-arc, arcB/p34-arc, arcC/p21-arc, arcD/p20-arc and arcE/p16-arc).

The protein localises to the cell projection. It is found in the pseudopodium. Functionally, serves as the scaffold for the assembly of a complex that links key players in the nucleation and termination of actin filament assembly with a ubiquitous barbed end-directed motor. This complex is composed of at least capping proteins (acpA and acpB), the Arp2/3 complex, type I myosins (myoB and myoC) and carmil. It has at least a modest ability to activate Arp2/3-dependent actin nucleation. CARMIL localizes along with the Arp2/3 complex, myoB, and myoC in the leading edge of cells and it plays a significant role in the structure and function of these actin-rich cellular extensions. This is Protein CARMIL (carmil) from Dictyostelium discoideum (Social amoeba).